The chain runs to 194 residues: Outer membrane protein A (194 aa).

The signal sequence occupies residues 1 to 24 (MNKPSKFALALAFAAVTASGVASA). A beta stranded transmembrane segment spans residues 30–38 (WRNPYGNVW). The OmpA-like domain occupies 77 to 193 (MAAKVVFNAD…RVEIEIVGSR (117 aa)).

Belongs to the outer membrane OOP (TC 1.B.6) superfamily.

It localises to the cell outer membrane. Its function is as follows. Structural protein that may protect the integrity of the bacterium. The polypeptide is Outer membrane protein A (Bordetella avium).